A 408-amino-acid chain; its full sequence is Serine/threonine transporter SstT (408 aa).

Helical transmembrane passes span 11–31 (LANGSLVLQILLGIAAGVILA), 43–63 (FLGSLFVGALKAIAPILVFIL), 81–101 (PIVVLYLFGTFAAALTAVVLS), 141–161 (ALMTGNYIGILAWGVGLGLAL), 192–212 (IGIFGLVAATFAETGFAAIAG), 216–236 (LLAVLLSAMAIIALIVNPLIV), 298–318 (MGGAAITITVLTLAAVHTLGI), 330–350 (VVAAVSACGASGVAGGSLLLI), and 357–377 (FGISNDIAMQVVAVGFIIGVI).

It belongs to the dicarboxylate/amino acid:cation symporter (DAACS) (TC 2.A.23) family.

Its subcellular location is the cell inner membrane. The catalysed reaction is L-serine(in) + Na(+)(in) = L-serine(out) + Na(+)(out). It carries out the reaction L-threonine(in) + Na(+)(in) = L-threonine(out) + Na(+)(out). Involved in the import of serine and threonine into the cell, with the concomitant import of sodium (symport system). In Shewanella sp. (strain W3-18-1), this protein is Serine/threonine transporter SstT.